The primary structure comprises 451 residues: uncharacterized protein (451 aa).

Residues 1–59 form the TRAM domain; sequence MLHKNDIIETEISDISHEGMGIAKVDGFVFFVENALPGEIIKMRVLKLRKRIGYGKVEE. Positions 283, 312, 333, and 381 each coordinate S-adenosyl-L-methionine. The Nucleophile role is filled by Cys-408.

This sequence belongs to the class I-like SAM-binding methyltransferase superfamily. RNA M5U methyltransferase family.

This is an uncharacterized protein from Streptococcus agalactiae serotype V (strain ATCC BAA-611 / 2603 V/R).